The following is a 410-amino-acid chain: Putative formamidase C869.04 (410 aa).

Belongs to the acetamidase/formamidase family. As to quaternary structure, homotrimer.

The protein resides in the cytoplasm. It localises to the nucleus. It catalyses the reaction formamide + H2O = formate + NH4(+). Its function is as follows. Hydrolyzes formamide with the production of ammonia which can be used as a source of nitrogen for growth. May also act on acetamide, propanamide and butanamide. This is Putative formamidase C869.04 from Schizosaccharomyces pombe (strain 972 / ATCC 24843) (Fission yeast).